The primary structure comprises 652 residues: 1,4-alpha-glucan branching enzyme GlgB (652 aa).

The active-site Nucleophile is D322. Residue E373 is the Proton donor of the active site.

It belongs to the glycosyl hydrolase 13 family. GlgB subfamily. As to quaternary structure, monomer.

It carries out the reaction Transfers a segment of a (1-&gt;4)-alpha-D-glucan chain to a primary hydroxy group in a similar glucan chain.. It participates in glycan biosynthesis; glycogen biosynthesis. Catalyzes the formation of the alpha-1,6-glucosidic linkages in glycogen by scission of a 1,4-alpha-linked oligosaccharide from growing alpha-1,4-glucan chains and the subsequent attachment of the oligosaccharide to the alpha-1,6 position. This chain is 1,4-alpha-glucan branching enzyme GlgB, found in Deinococcus geothermalis (strain DSM 11300 / CIP 105573 / AG-3a).